Here is a 248-residue protein sequence, read N- to C-terminus: Probable transcriptional regulatory protein FTW_1073 (248 aa).

It belongs to the TACO1 family.

The protein localises to the cytoplasm. The polypeptide is Probable transcriptional regulatory protein FTW_1073 (Francisella tularensis subsp. tularensis (strain WY96-3418)).